A 219-amino-acid chain; its full sequence is Probable nicotinate-nucleotide adenylyltransferase (219 aa).

Belongs to the NadD family.

The enzyme catalyses nicotinate beta-D-ribonucleotide + ATP + H(+) = deamido-NAD(+) + diphosphate. Its pathway is cofactor biosynthesis; NAD(+) biosynthesis; deamido-NAD(+) from nicotinate D-ribonucleotide: step 1/1. Catalyzes the reversible adenylation of nicotinate mononucleotide (NaMN) to nicotinic acid adenine dinucleotide (NaAD). This Cronobacter sakazakii (strain ATCC BAA-894) (Enterobacter sakazakii) protein is Probable nicotinate-nucleotide adenylyltransferase.